Reading from the N-terminus, the 70-residue chain is UPF0270 protein VS_2853 (70 aa).

This sequence belongs to the UPF0270 family.

This Vibrio atlanticus (strain LGP32) (Vibrio splendidus (strain Mel32)) protein is UPF0270 protein VS_2853.